Reading from the N-terminus, the 275-residue chain is Diaminopimelate epimerase (275 aa).

Substrate-binding residues include Asn-20 and Asn-63. Cys-72 acts as the Proton donor in catalysis. Substrate-binding positions include 73–74, Asn-179, and 197–198; these read GN and ER. The Proton acceptor role is filled by Cys-207. 208–209 provides a ligand contact to substrate; it reads GT.

It belongs to the diaminopimelate epimerase family. In terms of assembly, homodimer.

Its subcellular location is the cytoplasm. The enzyme catalyses (2S,6S)-2,6-diaminopimelate = meso-2,6-diaminopimelate. The protein operates within amino-acid biosynthesis; L-lysine biosynthesis via DAP pathway; DL-2,6-diaminopimelate from LL-2,6-diaminopimelate: step 1/1. Functionally, catalyzes the stereoinversion of LL-2,6-diaminopimelate (L,L-DAP) to meso-diaminopimelate (meso-DAP), a precursor of L-lysine and an essential component of the bacterial peptidoglycan. This is Diaminopimelate epimerase from Chlamydia trachomatis serovar A (strain ATCC VR-571B / DSM 19440 / HAR-13).